A 790-amino-acid polypeptide reads, in one-letter code: LMBR1 domain-containing protein 2 homolog B (790 aa).

The span at 1–21 shows a compositional bias: low complexity; the sequence is MSSNTTTPTPTSTPTPTSSPS. The segment at 1 to 22 is disordered; sequence MSSNTTTPTPTSTPTPTSSPSI. A run of 5 helical transmembrane segments spans residues 34-54, 66-86, 128-148, 167-187, and 195-215; these read FGNL…VLIG, IYAT…AYLV, FLYF…QSFS, VILY…ILSV, and FLSF…TITM. Residues 236-266 adopt a coiled-coil conformation; sequence LRNYRVEAVVLKTELEDVKRQLIDHLKLIKT. The next 3 helical transmembrane spans lie at 401-421, 442-462, and 539-559; these read FIIA…SEIV, PGIG…VCSY, and FTLF…FNLH. Disordered stretches follow at residues 630–665, 701–751, and 765–790; these read SQLD…PKLS, LGEK…TKDK, and SFQD…KNKK. Residues 644–665 show a composition bias toward polar residues; sequence IDSSNRYKPTPTKTSINIPKLS. Low complexity predominate over residues 706–734; it reads NASNNNNNNNNNNNNNNSNNKNSNNNNNS. Over residues 735–746 the composition is skewed to polar residues; that stretch reads ILTSNYESYSTP. A compositionally biased stretch (acidic residues) spans 766–778; it reads FQDDDDHTFDDIE.

This sequence belongs to the LIMR family.

The protein localises to the membrane. The protein is LMBR1 domain-containing protein 2 homolog B of Dictyostelium discoideum (Social amoeba).